A 294-amino-acid chain; its full sequence is Putative S-adenosyl-L-methionine-dependent methyltransferase RHA1_ro00605 (294 aa).

S-adenosyl-L-methionine-binding positions include Asp-120 and 149-150 (DL).

This sequence belongs to the UPF0677 family.

Exhibits S-adenosyl-L-methionine-dependent methyltransferase activity. The polypeptide is Putative S-adenosyl-L-methionine-dependent methyltransferase RHA1_ro00605 (Rhodococcus jostii (strain RHA1)).